We begin with the raw amino-acid sequence, 641 residues long: ATP-dependent zinc metalloprotease FtsH (641 aa).

Residues 1 to 16 (MNKQQKPKRSPLRPDY) lie on the Cytoplasmic side of the membrane. A helical transmembrane segment spans residues 17–37 (LVIVIIILLAIGMYFFFTEMM). Residues 38 to 131 (APKVKQFDEF…VSFVPHVSVD (94 aa)) lie on the Extracellular side of the membrane. A helical membrane pass occupies residues 132 to 152 (FWNIISTLLLIAAPIVLVVIM). At 153–641 (FRSMSSQSNK…EVEEDSKKSE (489 aa)) the chain is on the cytoplasmic side. 222 to 229 (GQPGTGKT) contacts ATP. Residue His-444 coordinates Zn(2+). Residue Glu-445 is part of the active site. Zn(2+)-binding residues include His-448 and Asp-520.

The protein in the central section; belongs to the AAA ATPase family. In the C-terminal section; belongs to the peptidase M41 family. In terms of assembly, homohexamer. Requires Zn(2+) as cofactor.

The protein resides in the cell membrane. In terms of biological role, acts as a processive, ATP-dependent zinc metallopeptidase for both cytoplasmic and membrane proteins. Plays a role in the quality control of integral membrane proteins. The polypeptide is ATP-dependent zinc metalloprotease FtsH (Acholeplasma laidlawii (strain PG-8A)).